The chain runs to 374 residues: Transcription termination factor 1, mitochondrial (374 aa).

The transit peptide at 1 to 37 (MASRNIWRVRRNFLFDLRGWVPQYSAEVFLKSIPFRP) directs the protein to the mitochondrion. 5 interaction with DNA regions span residues 146–147 (RS), 224–228 (QSTKR), 301–308 (SEKKFNDK), 332–335 (SIHT), and 361–368 (SQRRYEAK).

The protein belongs to the mTERF family. As to quaternary structure, monomer. In terms of processing, is a phosphoprotein. While the DNA-binding activity is unaffected by the phosphorylation/dephosphorylation state, only the phosphorylated form of the protein is active for termination activity. Functioning seems to be regulated by phosphorylation.

The protein resides in the mitochondrion. Functionally, transcription termination factor. Binds to a 28 bp region within the tRNA(Leu(uur)) gene at a position immediately adjacent to and downstream of the 16S rRNA gene; this region comprises a tridecamer sequence critical for directing accurate termination. Binds DNA along the major grove and promotes DNA bending and partial unwinding. Promotes base flipping. Transcription termination activity appears to be polarized with highest specificity for transcripts initiated on the light strand. The sequence is that of Transcription termination factor 1, mitochondrial (Mterf1) from Rattus norvegicus (Rat).